The sequence spans 436 residues: 3-ketoacyl-CoA thiolase (436 aa).

Catalysis depends on C99, which acts as the Acyl-thioester intermediate. Catalysis depends on proton acceptor residues H392 and C422.

Belongs to the thiolase-like superfamily. Thiolase family. Heterotetramer of two alpha chains (FadJ) and two beta chains (FadI).

It localises to the cytoplasm. The enzyme catalyses an acyl-CoA + acetyl-CoA = a 3-oxoacyl-CoA + CoA. It functions in the pathway lipid metabolism; fatty acid beta-oxidation. Functionally, catalyzes the final step of fatty acid oxidation in which acetyl-CoA is released and the CoA ester of a fatty acid two carbons shorter is formed. This chain is 3-ketoacyl-CoA thiolase, found in Cronobacter sakazakii (strain ATCC BAA-894) (Enterobacter sakazakii).